We begin with the raw amino-acid sequence, 197 residues long: Thymidine kinase (197 aa).

ATP-binding positions include 9 to 16 (SAMDAGKT) and 87 to 90 (DEIH). The Proton acceptor role is filled by E88. Zn(2+)-binding residues include C145, C147, C187, and H190.

Belongs to the thymidine kinase family. In terms of assembly, homotetramer.

The protein localises to the cytoplasm. It catalyses the reaction thymidine + ATP = dTMP + ADP + H(+). The polypeptide is Thymidine kinase (Francisella tularensis subsp. holarctica (strain LVS)).